The primary structure comprises 333 residues: Taste receptor type 2 member 38 (333 aa).

Topologically, residues 1–17 (MLTLTRIRTVSYEVRST) are extracellular. A helical transmembrane segment spans residues 18–38 (FLFISVLEFAVGFLTNAFVFL). The Cytoplasmic segment spans residues 39-55 (VNFWDVVKRQPLSNSDC). Residues 56–76 (VLLCLSISRLFLHGLLFLSAI) form a helical membrane-spanning segment. At 77–94 (QLTHFQKLSEPLNHSYQA) the chain is on the extracellular side. Residues 95 to 115 (IIMLWMIANQANLWLAACLSL) traverse the membrane as a helical segment. Topologically, residues 116 to 142 (LYCSKLIRFSHTFLICLASWVSRKISQ) are cytoplasmic. A helical membrane pass occupies residues 143–163 (MLLGIILCSCICTVLCVWCFF). The Extracellular segment spans residues 164-190 (SRPHFTVTTVLFMNNNTRLNWQIKDLN). A glycan (N-linked (GlcNAc...) asparagine) is linked at asparagine 178. A helical membrane pass occupies residues 191–211 (LFYSFLFCYLWSVPPFLLFLV). Residues 212–251 (SSGMLTVSLGRHMRTMKVYIRDSRDPSLEAHIKALKSLVS) lie on the Cytoplasmic side of the membrane. The chain crosses the membrane as a helical span at residues 252–272 (FFCFFVISSCAAFISVPLLIL). Residues 273 to 276 (WRDK) are Extracellular-facing. The helical transmembrane segment at 277–297 (IGVMVCVGIMAACPSGHAAVL) threads the bilayer. The Cytoplasmic portion of the chain corresponds to 298–333 (ISGNAKLRRAVTTILLWAQSSLKVRADHKADSRTPC).

The protein belongs to the G-protein coupled receptor T2R family.

It localises to the membrane. Its function is as follows. Receptor that may play a role in the perception of bitterness and is gustducin-linked. May play a role in sensing the chemical composition of the gastrointestinal content. The activity of this receptor may stimulate alpha gustducin, mediate PLC-beta-2 activation and lead to the gating of TRPM5. This chain is Taste receptor type 2 member 38 (TAS2R38), found in Gorilla gorilla gorilla (Western lowland gorilla).